A 23-amino-acid chain; its full sequence is Ascaphin-1 (23 aa).

Asparagine amide is present on Asn-23.

Expressed by the skin glands.

The protein localises to the secreted. In terms of biological role, antimicrobial peptide that shows higher potency against Gram-negative bacteria than against Gram-positive bacteria. Has a very week hemolytic activity. This chain is Ascaphin-1, found in Ascaphus truei (Coastal tailed frog).